Consider the following 480-residue polypeptide: Phosphomethylpyrimidine synthase (480 aa).

Substrate-binding positions include asparagine 66, methionine 95, tyrosine 124, histidine 159, 179–181 (SRG), 220–223 (DGLR), and glutamate 259. Histidine 263 contacts Zn(2+). A substrate-binding site is contributed by tyrosine 286. A Zn(2+)-binding site is contributed by histidine 327. Residues cysteine 407, cysteine 410, and cysteine 415 each coordinate [4Fe-4S] cluster. Residues 426–480 (DGDMESIEADADDRTPLEDSSAAAVNRPPVGTHDGADIPGPDADMPADTEGSADD) are disordered. The span at 470–480 (MPADTEGSADD) shows a compositional bias: acidic residues.

It belongs to the ThiC family. [4Fe-4S] cluster serves as cofactor.

It catalyses the reaction 5-amino-1-(5-phospho-beta-D-ribosyl)imidazole + S-adenosyl-L-methionine = 4-amino-2-methyl-5-(phosphooxymethyl)pyrimidine + CO + 5'-deoxyadenosine + formate + L-methionine + 3 H(+). The protein operates within cofactor biosynthesis; thiamine diphosphate biosynthesis. Functionally, catalyzes the synthesis of the hydroxymethylpyrimidine phosphate (HMP-P) moiety of thiamine from aminoimidazole ribotide (AIR) in a radical S-adenosyl-L-methionine (SAM)-dependent reaction. In Haloarcula marismortui (strain ATCC 43049 / DSM 3752 / JCM 8966 / VKM B-1809) (Halobacterium marismortui), this protein is Phosphomethylpyrimidine synthase.